We begin with the raw amino-acid sequence, 361 residues long: UDP-N-acetylglucosamine--N-acetylmuramyl-(pentapeptide) pyrophosphoryl-undecaprenol N-acetylglucosamine transferase (361 aa).

UDP-N-acetyl-alpha-D-glucosamine-binding positions include 11–13 (TGG), Asn-124, Arg-164, Ser-192, and Gln-295.

Belongs to the glycosyltransferase 28 family. MurG subfamily.

The protein resides in the cell membrane. It carries out the reaction di-trans,octa-cis-undecaprenyl diphospho-N-acetyl-alpha-D-muramoyl-L-alanyl-D-glutamyl-meso-2,6-diaminopimeloyl-D-alanyl-D-alanine + UDP-N-acetyl-alpha-D-glucosamine = di-trans,octa-cis-undecaprenyl diphospho-[N-acetyl-alpha-D-glucosaminyl-(1-&gt;4)]-N-acetyl-alpha-D-muramoyl-L-alanyl-D-glutamyl-meso-2,6-diaminopimeloyl-D-alanyl-D-alanine + UDP + H(+). Its pathway is cell wall biogenesis; peptidoglycan biosynthesis. Functionally, cell wall formation. Catalyzes the transfer of a GlcNAc subunit on undecaprenyl-pyrophosphoryl-MurNAc-pentapeptide (lipid intermediate I) to form undecaprenyl-pyrophosphoryl-MurNAc-(pentapeptide)GlcNAc (lipid intermediate II). The protein is UDP-N-acetylglucosamine--N-acetylmuramyl-(pentapeptide) pyrophosphoryl-undecaprenol N-acetylglucosamine transferase of Deinococcus geothermalis (strain DSM 11300 / CIP 105573 / AG-3a).